A 98-amino-acid polypeptide reads, in one-letter code: DNA-binding protein Fis (98 aa).

The H-T-H motif DNA-binding region spans 74 to 93 (QTRAATMLGINRGTLRKKLK).

Belongs to the transcriptional regulatory Fis family. As to quaternary structure, homodimer.

Activates ribosomal RNA transcription. Plays a direct role in upstream activation of rRNA promoters. The chain is DNA-binding protein Fis from Mannheimia haemolytica (Pasteurella haemolytica).